A 307-amino-acid polypeptide reads, in one-letter code: MAHPHLDKVKEYLLDLQDRLCDGLAAEEGDTAFREDSWTREAGGGGRSRVIENGEVFEKGGVNFSHVFGERLPASASAARPELAGRSFHAVGVSWVLHPRNPHVPTAHGNVRFFIAEKEGAEPVWWFGGGFDLTPFYPVFEDVVHWHRVAQETCAPFGDDVYPRFKRWCDEYFTLHHRDETRGVGGLFFDDLNEWEFERCFAFQRAVGDAFLEAYVPIVRRRQATEYGERERDFQAFRRGRYVEFNLVWDRGTLFGLQSGGRTESILMSMPPLAQWQYCWTPEPGSPEARLADEFLTPREWLEEAEA.

Ser-94 serves as a coordination point for substrate. 2 residues coordinate a divalent metal cation: His-98 and His-108. Catalysis depends on His-108, which acts as the Proton donor. 110–112 is a substrate binding site; it reads NVR. The a divalent metal cation site is built by His-147 and His-177. The interval 242–277 is important for dimerization; that stretch reads YVEFNLVWDRGTLFGLQSGGRTESILMSMPPLAQWQ. Residue 260–262 participates in substrate binding; that stretch reads GGR.

It belongs to the aerobic coproporphyrinogen-III oxidase family. Homodimer. Requires a divalent metal cation as cofactor.

The protein resides in the cytoplasm. It carries out the reaction coproporphyrinogen III + O2 + 2 H(+) = protoporphyrinogen IX + 2 CO2 + 2 H2O. It functions in the pathway porphyrin-containing compound metabolism; protoporphyrin-IX biosynthesis; protoporphyrinogen-IX from coproporphyrinogen-III (O2 route): step 1/1. Involved in the heme biosynthesis. Catalyzes the aerobic oxidative decarboxylation of propionate groups of rings A and B of coproporphyrinogen-III to yield the vinyl groups in protoporphyrinogen-IX. This is Oxygen-dependent coproporphyrinogen-III oxidase from Chromohalobacter salexigens (strain ATCC BAA-138 / DSM 3043 / CIP 106854 / NCIMB 13768 / 1H11).